The sequence spans 355 residues: Mitochondrial import inner membrane translocase subunit TIM50 (355 aa).

The transit peptide at 1 to 44 (MAASAAVFLRLRSGLRQGARGLCARLATPPPRAPDQAAEIGSRA) directs the protein to the mitochondrion. Residues 25–61 (RLATPPPRAPDQAAEIGSRAGTKAQTQGPQQQRSSEG) are disordered. Residues 45-67 (GTKAQTQGPQQQRSSEGPSYAKK) lie on the Mitochondrial matrix side of the membrane. The segment covering 47–61 (KAQTQGPQQQRSSEG) has biased composition (polar residues). A helical membrane pass occupies residues 68–88 (VALWLARLLGAGGTVSVIYIF). At 89 to 355 (GNNAVDENGA…SRLWPRSKQP (267 aa)) the chain is on the mitochondrial intermembrane side. Residues 145 to 288 (YYQPPYTLVL…LDLSAFLKTI (144 aa)) enclose the FCP1 homology domain. The residue at position 343 (Ser-343) is a Phosphoserine.

Belongs to the TIM50 family. As to quaternary structure, component of the TIM23 complex at least composed of TIMM23, TIMM17 (TIMM17A or TIMM17B) and TIMM50; within this complex, directly interacts with TIMM23. The complex interacts with the TIMM44 component of the PAM complex and with DNAJC15.

The protein resides in the mitochondrion inner membrane. In terms of biological role, essential component of the TIM23 complex, a complex that mediates the translocation of transit peptide-containing proteins across the mitochondrial inner membrane. Has some phosphatase activity in vitro; however such activity may not be relevant in vivo. In Bos taurus (Bovine), this protein is Mitochondrial import inner membrane translocase subunit TIM50 (TIMM50).